The primary structure comprises 207 residues: Large ribosomal subunit protein uL4 (207 aa).

A disordered region spans residues Arg45–Ile78.

It belongs to the universal ribosomal protein uL4 family. As to quaternary structure, part of the 50S ribosomal subunit.

One of the primary rRNA binding proteins, this protein initially binds near the 5'-end of the 23S rRNA. It is important during the early stages of 50S assembly. It makes multiple contacts with different domains of the 23S rRNA in the assembled 50S subunit and ribosome. Functionally, forms part of the polypeptide exit tunnel. The protein is Large ribosomal subunit protein uL4 of Geobacillus sp. (strain WCH70).